The sequence spans 244 residues: Large ribosomal subunit protein uL2 (244 aa).

The segment covering 1 to 12 (MGKRILVQRRGR) has biased composition (basic residues). Disordered regions lie at residues 1 to 26 (MGKRILVQRRGRGGSQFRSPSWKRDG) and 193 to 225 (AMSPYAHPHGGGSHQKGGTPVPKTAPPGQKVGF).

This sequence belongs to the universal ribosomal protein uL2 family. Part of the 50S ribosomal subunit. Forms a bridge to the 30S subunit in the 70S ribosome.

In terms of biological role, one of the primary rRNA binding proteins. Required for association of the 30S and 50S subunits to form the 70S ribosome, for tRNA binding and peptide bond formation. It has been suggested to have peptidyltransferase activity; this is somewhat controversial. Makes several contacts with the 16S rRNA in the 70S ribosome. The protein is Large ribosomal subunit protein uL2 of Pyrobaculum calidifontis (strain DSM 21063 / JCM 11548 / VA1).